We begin with the raw amino-acid sequence, 42 residues long: Protein Tat (42 aa).

The interaction with human CREBBP stretch occupies residues 1 to 24 (MEPVDPNLEPWNHPGSQPKTACNQ). Positions 22-37 (CNQCYCKKCSYHCLVC) are cysteine-rich. Lys-28 carries the post-translational modification N6-acetyllysine; by host PCAF.

It belongs to the lentiviruses Tat family. As to quaternary structure, interacts with host CCNT1. Associates with the P-TEFb complex composed at least of Tat, P-TEFb (CDK9 and CCNT1), TAR RNA, RNA Pol II. Recruits the HATs CREBBP, TAF1/TFIID, EP300, PCAF and GCN5L2. Interacts with host KAT5/Tip60; this interaction targets the latter to degradation. Interacts with the host deacetylase SIRT1. Interacts with host capping enzyme RNGTT; this interaction stimulates RNGTT. Binds to host KDR, and to the host integrins ITGAV/ITGB3 and ITGA5/ITGB1. Interacts with host KPNB1/importin beta-1 without previous binding to KPNA1/importin alpha-1. Interacts with EIF2AK2. Interacts with host nucleosome assembly protein NAP1L1; this interaction may be required for the transport of Tat within the nucleus, since the two proteins interact at the nuclear rim. Interacts with host C1QBP/SF2P32; this interaction involves lysine-acetylated Tat. Interacts with the host chemokine receptors CCR2, CCR3 and CXCR4. Interacts with host DPP4/CD26; this interaction may trigger an anti-proliferative effect. Interacts with host LDLR. Interacts with the host extracellular matrix metalloproteinase MMP1. Interacts with host PRMT6; this interaction mediates Tat's methylation. Interacts with, and is ubiquitinated by MDM2/Hdm2. Interacts with host PSMC3 and HTATIP2. Interacts with STAB1; this interaction may overcome SATB1-mediated repression of IL2 and IL2RA (interleukin) in T cells by binding to the same domain than HDAC1. Interacts (when acetylated) with human CDK13, thereby increasing HIV-1 mRNA splicing and promoting the production of the doubly spliced HIV-1 protein Nef. Interacts with host TBP; this interaction modulates the activity of transcriptional pre-initiation complex. Interacts with host RELA. Interacts with host PLSCR1; this interaction negatively regulates Tat transactivation activity by altering its subcellular distribution. Phosphorylated by EIF2AK2 on serine and threonine residues adjacent to the basic region important for TAR RNA binding and function. Phosphorylation of Tat by EIF2AK2 is dependent on the prior activation of EIF2AK2 by dsRNA. In terms of processing, asymmetrical arginine methylation by host PRMT6 seems to diminish the transactivation capacity of Tat and affects the interaction with host CCNT1. Post-translationally, polyubiquitination by host MDM2 does not target Tat to degradation, but activates its transactivation function and fosters interaction with CCNT1 and TAR RNA.

The protein localises to the host nucleus. It is found in the host nucleolus. The protein resides in the host cytoplasm. Its subcellular location is the secreted. Its function is as follows. Transcriptional activator that increases RNA Pol II processivity, thereby increasing the level of full-length viral transcripts. Recognizes a hairpin structure at the 5'-LTR of the nascent viral mRNAs referred to as the transactivation responsive RNA element (TAR) and recruits the cyclin T1-CDK9 complex (P-TEFb complex) that will in turn hyperphosphorylate the RNA polymerase II to allow efficient elongation. The CDK9 component of P-TEFb and other Tat-activated kinases hyperphosphorylate the C-terminus of RNA Pol II that becomes stabilized and much more processive. Other factors such as HTATSF1/Tat-SF1, SUPT5H/SPT5, and HTATIP2 are also important for Tat's function. Besides its effect on RNA Pol II processivity, Tat induces chromatin remodeling of proviral genes by recruiting the histone acetyltransferases (HATs) CREBBP, EP300 and PCAF to the chromatin. This also contributes to the increase in proviral transcription rate, especially when the provirus integrates in transcriptionally silent region of the host genome. To ensure maximal activation of the LTR, Tat mediates nuclear translocation of NF-kappa-B by interacting with host RELA. Through its interaction with host TBP, Tat may also modulate transcription initiation. Tat can reactivate a latently infected cell by penetrating in it and transactivating its LTR promoter. In the cytoplasm, Tat is thought to act as a translational activator of HIV-1 mRNAs. Extracellular circulating Tat can be endocytosed by surrounding uninfected cells via the binding to several surface receptors such as CD26, CXCR4, heparan sulfate proteoglycans (HSPG) or LDLR. Neurons are rarely infected, but they internalize Tat via their LDLR. Through its interaction with nuclear HATs, Tat is potentially able to control the acetylation-dependent cellular gene expression. Modulates the expression of many cellular genes involved in cell survival, proliferation or in coding for cytokines or cytokine receptors. Tat plays a role in T-cell and neurons apoptosis. Tat induced neurotoxicity and apoptosis probably contribute to neuroAIDS. Circulating Tat also acts as a chemokine-like and/or growth factor-like molecule that binds to specific receptors on the surface of the cells, affecting many cellular pathways. In the vascular system, Tat binds to ITGAV/ITGB3 and ITGA5/ITGB1 integrins dimers at the surface of endothelial cells and competes with bFGF for heparin-binding sites, leading to an excess of soluble bFGF. The polypeptide is Protein Tat (Human immunodeficiency virus type 1 group M subtype C (isolate ETH2220) (HIV-1)).